We begin with the raw amino-acid sequence, 542 residues long: Organic anion transporter 3 (542 aa).

The Cytoplasmic segment spans residues 1–9; that stretch reads MTFSEILDR. Serine 4 carries the phosphoserine modification. A helical membrane pass occupies residues 10–30; that stretch reads VGSMGPFQFLHVALLGFPILG. At 31-123 the chain is on the extracellular side; that stretch reads MANHNLLQIF…LVCSSNKLKE (93 aa). An N-linked (GlcNAc...) asparagine glycan is attached at asparagine 86. A helical transmembrane segment spans residues 124–144; the sequence is MAQSIFMAGILIGGLVLGDLS. Topologically, residues 145–150 are cytoplasmic; it reads DRFGRK. A helical transmembrane segment spans residues 151 to 171; sequence PILTCCYLLLAASGSSTAFSP. Topologically, residues 172-176 are extracellular; it reads TLPIY. The chain crosses the membrane as a helical span at residues 177-197; the sequence is MVFRFLCGFSISGISLSTVIL. The Cytoplasmic portion of the chain corresponds to 198–212; that stretch reads NVEWVPTKMRAITST. The helical transmembrane segment at 213-233 threads the bilayer; the sequence is AIGYCYTIGQFILPGLAYAIP. Topologically, residues 234–236 are extracellular; sequence QWR. A helical membrane pass occupies residues 237–257; that stretch reads WLQLTVSVPYFIFSLLSWWIP. At 258–327 the chain is on the cytoplasmic side; it reads ESIRWLVLAG…FRTPILRRVT (70 aa). The helical transmembrane segment at 328–348 threads the bilayer; the sequence is LCLSLAWFATGFAYYSLAMGV. Over 349 to 354 the chain is Extracellular; that stretch reads EEFGVN. Residues 355–375 form a helical membrane-spanning segment; the sequence is IYILQIIFGGVDIPAKFITIL. At 376–389 the chain is on the cytoplasmic side; the sequence is SLSYLGRHITQGAA. The chain crosses the membrane as a helical span at residues 390 to 410; sequence LILAGAAILSLIFVPMDMSLL. Residue arginine 411 is a topological domain, extracellular. Residues 412 to 432 form a helical membrane-spanning segment; it reads TILAVFGKGCLSGSFSCLFLY. Over 433 to 471 the chain is Cytoplasmic; sequence TSELFPTVIRQTGMGISNVWARVGSMISPLVKITGEIQP. A helical membrane pass occupies residues 472–492; sequence FIPNIIYGTVALLGGSAALFL. At 493–542 the chain is on the extracellular side; the sequence is PETLNQPLPETLEDMENWFLQSKKLKQEPEAEKASQRIPLQPSGPGVDRS. Residues 518-527 are compositionally biased toward basic and acidic residues; the sequence is KQEPEAEKAS. The disordered stretch occupies residues 518 to 542; it reads KQEPEAEKASQRIPLQPSGPGVDRS.

It belongs to the major facilitator (TC 2.A.1) superfamily. Organic cation transporter (TC 2.A.1.19) family.

Its subcellular location is the basolateral cell membrane. The catalysed reaction is estrone 3-sulfate(out) + glutarate(in) = estrone 3-sulfate(in) + glutarate(out). It catalyses the reaction estrone 3-sulfate(in) + 2-oxoglutarate(out) = estrone 3-sulfate(out) + 2-oxoglutarate(in). It carries out the reaction glutarate(in) + 2-oxoglutarate(out) = glutarate(out) + 2-oxoglutarate(in). The enzyme catalyses urate(in) + 2-oxoglutarate(out) = urate(out) + 2-oxoglutarate(in). The catalysed reaction is taurocholate(out) + glutarate(in) = taurocholate(in) + glutarate(out). It catalyses the reaction dehydroepiandrosterone 3-sulfate(out) + glutarate(in) = dehydroepiandrosterone 3-sulfate(in) + glutarate(out). It carries out the reaction prostaglandin F2alpha(out) + glutarate(in) = prostaglandin F2alpha(in) + glutarate(out). The enzyme catalyses prostaglandin F2alpha(out) + 2-oxoglutarate(in) = prostaglandin F2alpha(in) + 2-oxoglutarate(out). The catalysed reaction is (R)-carnitine(out) + 2-oxoglutarate(in) = (R)-carnitine(in) + 2-oxoglutarate(out). It catalyses the reaction glutarate(in) + (R)-carnitine(out) = glutarate(out) + (R)-carnitine(in). It carries out the reaction prostaglandin E2(out) + 2-oxoglutarate(in) = prostaglandin E2(in) + 2-oxoglutarate(out). The enzyme catalyses prostaglandin E2(out) + glutarate(in) = prostaglandin E2(in) + glutarate(out). The catalysed reaction is urate(in) + glutarate(out) = urate(out) + glutarate(in). It catalyses the reaction taurocholate(out) + 2-oxoglutarate(in) = taurocholate(in) + 2-oxoglutarate(out). It carries out the reaction dehydroepiandrosterone 3-sulfate(out) + 2-oxoglutarate(in) = dehydroepiandrosterone 3-sulfate(in) + 2-oxoglutarate(out). The enzyme catalyses kynurenate(out) + a dicarboxylate(in) = kynurenate(in) + a dicarboxylate(out). The catalysed reaction is (indol-3-yl)acetate(out) + a dicarboxylate(in) = (indol-3-yl)acetate(in) + a dicarboxylate(out). It catalyses the reaction indoxyl sulfate(out) + a dicarboxylate(in) = indoxyl sulfate(in) + a dicarboxylate(out). It carries out the reaction N-benzoylglycine(out) + a dicarboxylate(in) = N-benzoylglycine(in) + a dicarboxylate(out). The enzyme catalyses 3-carboxy-4-methyl-5-propyl-2-furanpropanoate(out) + a dicarboxylate(in) = 3-carboxy-4-methyl-5-propyl-2-furanpropanoate(in) + a dicarboxylate(out). The catalysed reaction is (6R)-L-erythro-5,6,7,8-tetrahydrobiopterin(out) + a dicarboxylate(in) = (6R)-L-erythro-5,6,7,8-tetrahydrobiopterin(in) + a dicarboxylate(out). It catalyses the reaction L-erythro-7,8-dihydrobiopterin(out) + a dicarboxylate(in) = L-erythro-7,8-dihydrobiopterin(in) + a dicarboxylate(out). It carries out the reaction L-sepiapterin(out) + a dicarboxylate(in) = L-sepiapterin(in) + a dicarboxylate(out). Its function is as follows. Functions as an organic anion/dicarboxylate exchanger that couples organic anion uptake indirectly to the sodium gradient. Transports organic anions such as estrone 3-sulfate (E1S) and urate in exchange for dicarboxylates such as glutarate or ketoglutarate (2-oxoglutarate). Plays an important role in the excretion of endogenous and exogenous organic anions, especially from the kidney and the brain. E1S transport is pH- and chloride-dependent and may also involve E1S/cGMP exchange. Responsible for the transport of prostaglandin E2 (PGE2) and prostaglandin F2(alpha) (PGF2(alpha)) in the basolateral side of the renal tubule. Involved in the transport of neuroactive tryptophan metabolites kynurenate and xanthurenate. Functions as a biopterin transporters involved in the uptake and the secretion of coenzymes tetrahydrobiopterin (BH4), dihydrobiopterin (BH2) and sepiapterin to urine, thereby determining baseline levels of blood biopterins. May be involved in the basolateral transport of steviol, a metabolite of the popular sugar substitute stevioside. May participate in the detoxification/ renal excretion of drugs and xenobiotics, such as the histamine H(2)-receptor antagonists fexofenadine and cimetidine, the antibiotic benzylpenicillin (PCG), the anionic herbicide 2,4-dichloro-phenoxyacetate (2,4-D), the diagnostic agent p-aminohippurate (PAH), the antiviral acyclovir (ACV), and the mycotoxin ochratoxin (OTA), by transporting these exogenous organic anions across the cell membrane in exchange for dicarboxylates such as 2-oxoglutarate. Contributes to the renal uptake of potent uremic toxins (indoxyl sulfate (IS), indole acetate (IA), hippurate/N-benzoylglycine (HA) and 3-carboxy-4-methyl-5-propyl-2-furanpropionate (CMPF)), pravastatin, PCG, E1S and dehydroepiandrosterone sulfate (DHEAS), and is partly involved in the renal uptake of temocaprilat (an angiotensin-converting enzyme (ACE) inhibitor). May contribute to the release of cortisol in the adrenals. Involved in one of the detoxification systems on the choroid plexus (CP), removes substrates such as E1S or taurocholate (TC), PCG, 2,4-D and PAH, from the cerebrospinal fluid (CSF) to the blood for eventual excretion in urine and bile. Also contributes to the uptake of several other organic compounds such as the prostanoids prostaglandin E(2) and prostaglandin F(2-alpha), L-carnitine, and the therapeutic drugs allopurinol, 6-mercaptopurine (6-MP) and 5-fluorouracil (5-FU). Mediates the transport of PAH, PCG, and the statins pravastatin and pitavastatin, from the cerebrum into the blood circulation across the blood-brain barrier (BBB). In summary, plays a role in the efflux of drugs and xenobiotics, helping reduce their undesired toxicological effects on the body. This is Organic anion transporter 3 (SLC22A8) from Oryctolagus cuniculus (Rabbit).